The chain runs to 310 residues: Homocysteine S-methyltransferase (310 aa).

In terms of domain architecture, Hcy-binding spans 1 to 310; that stretch reads MSQNNPLRAL…ADIAALKARS (310 aa). Positions 229, 295, and 296 each coordinate Zn(2+).

As to quaternary structure, monomer. It depends on Zn(2+) as a cofactor.

The catalysed reaction is S-methyl-L-methionine + L-homocysteine = 2 L-methionine + H(+). Catalyzes methyl transfer from S-methylmethionine or S-adenosylmethionine (less efficient) to homocysteine, selenohomocysteine and less efficiently selenocysteine. The chain is Homocysteine S-methyltransferase (mmuM) from Escherichia coli (strain K12).